We begin with the raw amino-acid sequence, 192 residues long: MAGLRLIVGLGNPGSEHARTRHNAGFHFVEALAEKAGARWNVDSKLFGETAKVEIAGQTVWLLKPATFMNLSGKSVTAAQRFWKIEPEETLLAHDELDLAPGVARLKFDGGHGGQNGLRDTIRLLGHGKFHRLRVGIGHPGHKDRVVGWVLGRPSKDDEVLISRAIDDAIDVLPLAVQGDFSEAMKRLHTPK.

H17 contributes to the tRNA binding site. H22 (proton acceptor) is an active-site residue. TRNA is bound by residues F68, N70, and N116.

It belongs to the PTH family. As to quaternary structure, monomer.

Its subcellular location is the cytoplasm. It catalyses the reaction an N-acyl-L-alpha-aminoacyl-tRNA + H2O = an N-acyl-L-amino acid + a tRNA + H(+). Functionally, hydrolyzes ribosome-free peptidyl-tRNAs (with 1 or more amino acids incorporated), which drop off the ribosome during protein synthesis, or as a result of ribosome stalling. Its function is as follows. Catalyzes the release of premature peptidyl moieties from peptidyl-tRNA molecules trapped in stalled 50S ribosomal subunits, and thus maintains levels of free tRNAs and 50S ribosomes. The sequence is that of Peptidyl-tRNA hydrolase from Stenotrophomonas maltophilia (strain R551-3).